Reading from the N-terminus, the 857-residue chain is Protein app1 (857 aa).

The region spanning 6-133 (DTSTHGAEIR…NMDDIIRRVA (128 aa)) is the ADF-H domain. Disordered regions lie at residues 167 to 562 (AKVA…VPQR), 585 to 622 (EVPSVPQPPVAPVVPEAPSVPQPPVAPVAPEVPSVPQR), and 693 to 723 (QLNEPVVPPLPPHDETQEPQVGGDVKATEHT). The segment covering 193 to 204 (KDSKDNSWDDSS) has biased composition (basic and acidic residues). The span at 205–217 (KQSNTQTANTTSN) shows a compositional bias: low complexity. Positions 229 to 240 (AGRKEKSQENKP) are enriched in basic and acidic residues. 5 stretches are compositionally biased toward polar residues: residues 276–295 (SISTTTTGSSYRSAESSHAP), 371–385 (PPASTTASKQDSPST), 399–409 (KQVSSNETSAQ), 443–452 (KISSFNSKAG), and 498–511 (SSASQKAAQPSVIT). The segment covering 522–561 (VVPEAPSVHQPPAAPVAPEVPSAPQRPAAPVVPEAPSVPQ) has biased composition (low complexity). Composition is skewed to pro residues over residues 587–596 (PSVPQPPVAP) and 602–611 (PSVPQPPVAP). The segment covering 612–622 (VAPEVPSVPQR) has biased composition (low complexity). SH3 domains are found at residues 725-785 (PTKT…ITGP) and 800-857 (GPGK…VEEI).

This is Protein app1 (app1) from Schizosaccharomyces pombe (strain 972 / ATCC 24843) (Fission yeast).